Consider the following 365-residue polypeptide: Aminomethyltransferase (365 aa).

The protein belongs to the GcvT family. As to quaternary structure, the glycine cleavage system is composed of four proteins: P, T, L and H.

The catalysed reaction is N(6)-[(R)-S(8)-aminomethyldihydrolipoyl]-L-lysyl-[protein] + (6S)-5,6,7,8-tetrahydrofolate = N(6)-[(R)-dihydrolipoyl]-L-lysyl-[protein] + (6R)-5,10-methylene-5,6,7,8-tetrahydrofolate + NH4(+). Its function is as follows. The glycine cleavage system catalyzes the degradation of glycine. This Erwinia tasmaniensis (strain DSM 17950 / CFBP 7177 / CIP 109463 / NCPPB 4357 / Et1/99) protein is Aminomethyltransferase.